Here is a 461-residue protein sequence, read N- to C-terminus: Ribitol-5-phosphate transferase FKTN (461 aa).

Topologically, residues 1 to 7 (MSRINKN) are cytoplasmic. The required and sufficient for interaction with POMGNT1 stretch occupies residues 6–27 (KNVVLALLTLTSSAFLLFQLYY). The helical; Signal-anchor for type II membrane protein transmembrane segment at 8–28 (VVLALLTLTSSAFLLFQLYYY) threads the bilayer. Residues 29 to 461 (KHYLSTRNGA…SEWDEVIQLY (433 aa)) are Lumenal-facing. The N-linked (GlcNAc...) asparagine glycan is linked to asparagine 92.

The protein belongs to the LicD transferase family. In terms of assembly, forms a complex composed of FKTN/fukutin, FKRP and RXYLT1/TMEM5. Interacts (via transmembrane domain) with POMGNT1; the interaction is direct and is required for normal POMGNT1 location in Golgi membranes. Expressed in the retina (at protein level).

The protein resides in the golgi apparatus membrane. It localises to the cytoplasm. It is found in the nucleus. The enzyme catalyses 3-O-[beta-D-GalNAc-(1-&gt;3)-beta-D-GlcNAc-(1-&gt;4)-(O-6-P-alpha-D-Man)]-Thr-[protein] + CDP-L-ribitol = 3-O-[Rib-ol-P-3-beta-D-GalNAc-(1-&gt;3)-beta-D-GlcNAc-(1-&gt;4)-(O-6-P-alpha-D-Man)]-Thr-[protein] + CMP + H(+). It participates in protein modification; protein glycosylation. In terms of biological role, catalyzes the transfer of CDP-ribitol to the distal N-acetylgalactosamine of the phosphorylated O-mannosyl trisaccharide (N-acetylgalactosamine-beta-3-N-acetylglucosamine-beta-4-(phosphate-6-)mannose), a carbohydrate structure present in alpha-dystroglycan (DAG1). This constitutes the first step in the formation of the ribitol 5-phosphate tandem repeat which links the phosphorylated O-mannosyl trisaccharide to the ligand binding moiety composed of repeats of 3-xylosyl-alpha-1,3-glucuronic acid-beta-1. May interact with and reinforce a large complex encompassing the outside and inside of muscle membranes. Could be involved in brain development. In Macaca fascicularis (Crab-eating macaque), this protein is Ribitol-5-phosphate transferase FKTN.